Consider the following 396-residue polypeptide: Small ribosomal subunit protein uS9m (396 aa).

The segment at 374–396 (PRVRERKKPGQEGARRKFTWKKR) is disordered.

It belongs to the universal ribosomal protein uS9 family. Component of the mitochondrial ribosome small subunit (28S) which comprises a 12S rRNA and about 30 distinct proteins.

The protein localises to the mitochondrion. In Bos taurus (Bovine), this protein is Small ribosomal subunit protein uS9m (MRPS9).